A 416-amino-acid chain; its full sequence is Solute carrier family 35 member D3 (416 aa).

10 helical membrane passes run 9 to 29, 38 to 58, 64 to 84, 103 to 123, 131 to 151, 155 to 175, 187 to 207, 224 to 244, 257 to 277, and 280 to 300; these read VLGI…NILL, FSFL…SLEL, LIAV…VAVL, MYVV…VLVL, GVLA…AGDL, PIGY…LVLI, LTAQ…CSFA, AMVC…FTTL, FVGV…FSDV, and TSLF…YCVA. The tract at residues 334 to 384 is disordered; sequence MEELPGEGGNGRSEGGEAAGGPAQESRQEVRGSPRGVPLVAGSSEEGSRRS. Gly residues predominate over residues 339 to 352; the sequence is GEGGNGRSEGGEAA.

Belongs to the TPT transporter family. SLC35D subfamily. In terms of assembly, could interact with ATG14, BECN1 and PIK3C3 that form the PI3KC3-C1/AIC/autophagy initiation complex; enhancing the formation of the AIC and promoting autophagy.

It localises to the cytoplasmic vesicle. The protein resides in the secretory vesicle. Its subcellular location is the synaptic vesicle membrane. It is found in the early endosome membrane. The protein localises to the endoplasmic reticulum membrane. It catalyses the reaction UDP-alpha-D-glucose(in) = UDP-alpha-D-glucose(out). Its activity is regulated as follows. Inhibited by proton uncouplers that directly abolish the proton electrochemical gradient. Its function is as follows. Probable UDP-glucose transmembrane transporter involved in UDP-glucose transport from the cytosol to the lumen of synaptic vesicles. It is involved in platelet dense granules maturation. Functionally, alternatively, could function as a molecular adapter enhancing the formation of the PI3KC3-C1/AIC/autophagy initiation complex to promote autophagy in dopaminergic neurons. Could also regulate the plasma membrane localization of the D(1A) dopamine receptor/DRD1 and dopamine signaling. In Homo sapiens (Human), this protein is Solute carrier family 35 member D3.